The following is a 183-amino-acid chain: Archaemetzincin (183 aa).

His132 lines the Zn(2+) pocket. The active-site Proton acceptor is the Glu133. Residues His136, His142, Cys143, Cys148, Cys167, and Cys170 each contribute to the Zn(2+) site.

It belongs to the peptidase M54 family. In terms of assembly, monomer. The cofactor is Zn(2+).

Functionally, probable zinc metalloprotease whose natural substrate is unknown. The chain is Archaemetzincin from Aeropyrum pernix (strain ATCC 700893 / DSM 11879 / JCM 9820 / NBRC 100138 / K1).